A 216-amino-acid chain; its full sequence is Adenylate kinase (216 aa).

10–15 contacts ATP; the sequence is GAGKGT. The tract at residues 30–59 is NMP; the sequence is STGDMLRAAVKAGTPLGLELKKVMDAGQLV. AMP contacts are provided by residues Thr-31, Arg-36, 57–59, 85–88, and Gln-92; these read QLV and GFPR. The segment at 122–159 is LID; sequence GRRVHLASGRTYHIQYNPPKVEGKDDETGEDLIQRDDD. ATP is bound by residues Arg-123 and 132 to 133; that span reads TY. Arg-156 and Arg-167 together coordinate AMP. An ATP-binding site is contributed by Gly-202.

This sequence belongs to the adenylate kinase family. In terms of assembly, monomer.

The protein resides in the cytoplasm. It carries out the reaction AMP + ATP = 2 ADP. The protein operates within purine metabolism; AMP biosynthesis via salvage pathway; AMP from ADP: step 1/1. In terms of biological role, catalyzes the reversible transfer of the terminal phosphate group between ATP and AMP. Plays an important role in cellular energy homeostasis and in adenine nucleotide metabolism. The chain is Adenylate kinase from Pseudomonas putida (strain ATCC 700007 / DSM 6899 / JCM 31910 / BCRC 17059 / LMG 24140 / F1).